A 611-amino-acid polypeptide reads, in one-letter code: Conglutin beta 1 (611 aa).

Positions methionine 1 to glycine 30 are cleaved as a signal peptide. Basic and acidic residues-rich tracts occupy residues lysine 32–serine 82 and serine 130–glutamate 141. Disordered regions lie at residues lysine 32–glutamine 194 and leucine 384–serine 407. A compositionally biased stretch (low complexity) spans glutamine 142 to glycine 151. The span at serine 152–arginine 181 shows a compositional bias: basic and acidic residues. The Cupin type-1 1 domain occupies tyrosine 186–glutamate 344. Low complexity predominate over residues serine 390–proline 402. The region spanning phenylalanine 403–glutamate 569 is the Cupin type-1 2 domain. An N-linked (GlcNAc...) asparagine glycan is attached at asparagine 434. Residues aspartate 476–valine 495 form a disordered region. The span at glutamate 483–glutamate 492 shows a compositional bias: acidic residues. Asparagine 519 is a glycosylation site (N-linked (GlcNAc...) asparagine). The span at phenylalanine 580–glutamine 589 shows a compositional bias: low complexity. The interval phenylalanine 580–arginine 600 is disordered.

The protein belongs to the 7S seed storage protein family. In terms of assembly, component of globulins complexes which accumulate in seeds.

In terms of biological role, seed storage protein. Accumulates during seed development and is hydrolyzed after germination to provide a carbon and nitrogen source for the developing seedling. In Lupinus angustifolius (Narrow-leaved blue lupine), this protein is Conglutin beta 1.